Consider the following 589-residue polypeptide: Glutamine--fructose-6-phosphate aminotransferase [isomerizing] (589 aa).

The active-site Nucleophile; for GATase activity is cysteine 2. The Glutamine amidotransferase type-2 domain occupies 2 to 221 (CGIIGIVSLR…DDELGFITPE (220 aa)). SIS domains lie at 286–426 (VIEE…KMEK) and 445–579 (IGEE…PDKP). Lysine 584 serves as the catalytic For Fru-6P isomerization activity.

As to quaternary structure, homodimer.

Its subcellular location is the cytoplasm. It catalyses the reaction D-fructose 6-phosphate + L-glutamine = D-glucosamine 6-phosphate + L-glutamate. Functionally, catalyzes the first step in hexosamine metabolism, converting fructose-6P into glucosamine-6P using glutamine as a nitrogen source. The protein is Glutamine--fructose-6-phosphate aminotransferase [isomerizing] of Sulfurisphaera tokodaii (strain DSM 16993 / JCM 10545 / NBRC 100140 / 7) (Sulfolobus tokodaii).